The sequence spans 379 residues: Stimulator of interferon genes protein (379 aa).

Residues methionine 1–arginine 23 lie on the Cytoplasmic side of the membrane. Residues alanine 24–phenylalanine 40 traverse the membrane as a helical segment. Residues leucine 41–isoleucine 50 lie on the Lumenal side of the membrane. Residues arginine 51–glutamate 75 form a helical membrane-spanning segment. Residues isoleucine 76–proline 97 lie on the Cytoplasmic side of the membrane. Residues arginine 98–tyrosine 111 form a helical membrane-spanning segment. Topologically, residues leucine 112 to serine 121 are lumenal. The helical transmembrane segment at proline 122–leucine 139 threads the bilayer. Residues glycine 140–proline 379 lie on the Cytoplasmic side of the membrane. Positions lysine 158–glutamate 345 are cyclic dinucleotide-binding domain (CBD). Residues serine 167, tyrosine 172, arginine 243–lysine 246, and serine 268 each bind 3',3'-c-di-GMP. 2',3'-cGAMP contacts are provided by residues serine 167–tyrosine 172, arginine 243–lysine 246, and serine 268. Residues leucine 363–serine 366 carry the pLxIS motif motif. Residue serine 366 is modified to Phosphoserine; by TBK1.

This sequence belongs to the STING family. As to quaternary structure, homodimer; forms a homodimer in absence of cyclic nucleotide (c-di-GMP or cGAMP). Homotetramer; in presence of cyclic nucleotide (c-di-GMP or cGAMP), forms tetramers and higher-order oligomers through side-by-side packing. Interacts (when phosphorylated) with IRF3; following activation and phosphorylation on the pLxIS motif by TBK1, recruits IRF3. Phosphorylation by TBK1 leads to activation and production of IFN-beta. Following cyclic nucleotide (c-di-GMP or cGAMP)-binding, activation and translocation from the endoplasmic reticulum, STING1 is phosphorylated by TBK1 at Ser-366 in the pLxIS motif. The phosphorylated pLxIS motif constitutes an IRF3-binding motif, leading to recruitment of the transcription factor IRF3 to induce type-I interferons and other cytokines.

It is found in the endoplasmic reticulum membrane. It localises to the cytoplasm. The protein localises to the perinuclear region. The protein resides in the endoplasmic reticulum-Golgi intermediate compartment membrane. Its subcellular location is the golgi apparatus membrane. It is found in the cytoplasmic vesicle. It localises to the autophagosome membrane. It carries out the reaction H(+)(in) = H(+)(out). Functionally, facilitator of innate immune signaling that acts as a sensor of cytosolic DNA from bacteria and viruses and promotes the production of type I interferon (IFN-alpha and IFN-beta). Innate immune response is triggered in response to non-CpG double-stranded DNA from viruses and bacteria delivered to the cytoplasm. Acts by binding cyclic dinucleotides: recognizes and binds cyclic di-GMP (c-di-GMP), a second messenger produced by bacteria, and cyclic GMP-AMP (cGAMP), a messenger produced by CGAS in response to DNA virus in the cytosol. Upon binding of c-di-GMP or cGAMP, STING1 oligomerizes and is able to activate both NF-kappa-B and IRF3 transcription pathways to induce expression of type I interferon and exert a potent anti-viral state. Exhibits 2',3' phosphodiester linkage-specific ligand recognition: can bind both 2'-3' linked cGAMP and 3'-3' linked cGAMP but is preferentially activated by 2'-3' linked cGAMP. In addition to promote the production of type I interferons, plays a direct role in autophagy. Following cGAMP-binding, STING1 buds from the endoplasmic reticulum into COPII vesicles, which then form the endoplasmic reticulum-Golgi intermediate compartment (ERGIC). The ERGIC serves as the membrane source for LC3 lipidation, leading to formation of autophagosomes that target cytosolic DNA or DNA viruses for degradation by the lysosome. Promotes autophagy by acting as a proton channel that directs proton efflux from the Golgi to facilitate LC3 lipidation. The autophagy- and interferon-inducing activities can be uncoupled and autophagy induction is independent of TBK1 phosphorylation. The chain is Stimulator of interferon genes protein from Gallus gallus (Chicken).